The following is a 282-amino-acid chain: Pantothenate synthetase (282 aa).

30-37 provides a ligand contact to ATP; it reads MGYLHEGH. The active-site Proton donor is His37. A (R)-pantoate-binding site is contributed by Gln61. Gln61 contacts beta-alanine. 147 to 150 lines the ATP pocket; sequence GMKD. Gln153 contacts (R)-pantoate. ATP is bound by residues Val176 and 184–187; that span reads KSSR.

The protein belongs to the pantothenate synthetase family. As to quaternary structure, homodimer.

It localises to the cytoplasm. It catalyses the reaction (R)-pantoate + beta-alanine + ATP = (R)-pantothenate + AMP + diphosphate + H(+). It functions in the pathway cofactor biosynthesis; (R)-pantothenate biosynthesis; (R)-pantothenate from (R)-pantoate and beta-alanine: step 1/1. Catalyzes the condensation of pantoate with beta-alanine in an ATP-dependent reaction via a pantoyl-adenylate intermediate. In Bacillus cereus (strain ZK / E33L), this protein is Pantothenate synthetase.